A 272-amino-acid chain; its full sequence is Ribosomal RNA small subunit methyltransferase A (272 aa).

Residues H10, L12, G37, E57, D82, and N98 each contribute to the S-adenosyl-L-methionine site.

This sequence belongs to the class I-like SAM-binding methyltransferase superfamily. rRNA adenine N(6)-methyltransferase family. RsmA subfamily.

The protein resides in the cytoplasm. It catalyses the reaction adenosine(1518)/adenosine(1519) in 16S rRNA + 4 S-adenosyl-L-methionine = N(6)-dimethyladenosine(1518)/N(6)-dimethyladenosine(1519) in 16S rRNA + 4 S-adenosyl-L-homocysteine + 4 H(+). In terms of biological role, specifically dimethylates two adjacent adenosines (A1518 and A1519) in the loop of a conserved hairpin near the 3'-end of 16S rRNA in the 30S particle. May play a critical role in biogenesis of 30S subunits. The protein is Ribosomal RNA small subunit methyltransferase A of Gloeobacter violaceus (strain ATCC 29082 / PCC 7421).